We begin with the raw amino-acid sequence, 322 residues long: Ribosome biogenesis protein RLP7 (322 aa).

A compositionally biased stretch (polar residues) spans 1 to 16 (MSSTQDSKAQTLNSNP). Residues 1 to 52 (MSSTQDSKAQTLNSNPEILLRKRRNADRTRIERQELAKKKREEQIKKKRSNK) form a disordered region. S2 bears the N-acetylserine mark. S14 bears the Phosphoserine mark. Over residues 26–45 (ADRTRIERQELAKKKREEQI) the composition is skewed to basic and acidic residues. T120 bears the Phosphothreonine mark. Phosphoserine is present on S278.

The protein belongs to the universal ribosomal protein uL30 family.

It localises to the nucleus. Its subcellular location is the nucleolus. Functionally, involved in the biogenesis of the 60S ribosomal subunit. May act as a specificity factor that binds precursor rRNAs and tethers the enzymes that carry out the early 5' to 3' exonucleolytic reactions that generate the mature rRNAs. The protein is Ribosome biogenesis protein RLP7 (RLP7) of Saccharomyces cerevisiae (strain ATCC 204508 / S288c) (Baker's yeast).